Here is a 127-residue protein sequence, read N- to C-terminus: Translation initiation factor 5A (127 aa).

Residue Lys-35 is modified to Hypusine.

This sequence belongs to the eIF-5A family.

Its subcellular location is the cytoplasm. Functions by promoting the formation of the first peptide bond. The polypeptide is Translation initiation factor 5A (Methanococcoides burtonii (strain DSM 6242 / NBRC 107633 / OCM 468 / ACE-M)).